Consider the following 243-residue polypeptide: Adenosylcobinamide-GDP ribazoletransferase (243 aa).

A run of 5 helical transmembrane segments spans residues Leu-31–Leu-51, Leu-57–Leu-77, Ile-109–Ile-129, Ile-135–Thr-155, and Val-188–Trp-208.

Belongs to the CobS family. The cofactor is Mg(2+).

The protein localises to the cell inner membrane. It catalyses the reaction alpha-ribazole + adenosylcob(III)inamide-GDP = adenosylcob(III)alamin + GMP + H(+). The enzyme catalyses alpha-ribazole 5'-phosphate + adenosylcob(III)inamide-GDP = adenosylcob(III)alamin 5'-phosphate + GMP + H(+). Its pathway is cofactor biosynthesis; adenosylcobalamin biosynthesis; adenosylcobalamin from cob(II)yrinate a,c-diamide: step 7/7. Functionally, joins adenosylcobinamide-GDP and alpha-ribazole to generate adenosylcobalamin (Ado-cobalamin). Also synthesizes adenosylcobalamin 5'-phosphate from adenosylcobinamide-GDP and alpha-ribazole 5'-phosphate. In Pseudomonas savastanoi pv. phaseolicola (strain 1448A / Race 6) (Pseudomonas syringae pv. phaseolicola (strain 1448A / Race 6)), this protein is Adenosylcobinamide-GDP ribazoletransferase.